The primary structure comprises 211 residues: Ribonuclease T (211 aa).

An Exonuclease domain is found at 24–198; that stretch reads VVVDVETGGF…YDAEKTAHLF (175 aa). Residues D27, E29, H185, and D190 each coordinate Mg(2+). H185 (proton donor/acceptor) is an active-site residue.

This sequence belongs to the RNase T family. As to quaternary structure, homodimer. It depends on Mg(2+) as a cofactor.

In terms of biological role, trims short 3' overhangs of a variety of RNA species, leaving a one or two nucleotide 3' overhang. Responsible for the end-turnover of tRNA: specifically removes the terminal AMP residue from uncharged tRNA (tRNA-C-C-A). Also appears to be involved in tRNA biosynthesis. The sequence is that of Ribonuclease T from Xylella fastidiosa (strain Temecula1 / ATCC 700964).